Reading from the N-terminus, the 544-residue chain is Chaperonin GroEL (544 aa).

ATP-binding positions include 29–32, lysine 50, 86–90, glycine 413, 479–481, and aspartate 495; these read TLGP, DGTTT, and DAA.

This sequence belongs to the chaperonin (HSP60) family. In terms of assembly, forms a cylinder of 14 subunits composed of two heptameric rings stacked back-to-back. Interacts with the co-chaperonin GroES.

It localises to the cytoplasm. It carries out the reaction ATP + H2O + a folded polypeptide = ADP + phosphate + an unfolded polypeptide.. Together with its co-chaperonin GroES, plays an essential role in assisting protein folding. The GroEL-GroES system forms a nano-cage that allows encapsulation of the non-native substrate proteins and provides a physical environment optimized to promote and accelerate protein folding. This Borrelia turicatae (strain 91E135) protein is Chaperonin GroEL.